A 376-amino-acid chain; its full sequence is MGCFRQTRDDEDDKLRKEANKKIEKQLAKDKLLYRGTHRLLLLGAGESGKSTIVKQMRILHVNGFSPEERKQKIEDIKRNVRDAILTITGAMSTLNPPVQLEHPQNKAKVDYIQDKASQAEFDYPPIFYEYTEILWKDKGVQAAFERSNEYQLIDCAQYFLDRVHIIRQAEYTPSEQDILRCRVLTSGIFETKFSVDKVNFHMFDVGGQRDERRKWIQCFNDVTAIIFVTACSGYNMVLREDATQNRLKESLDLFKSIWNNRWLRTISVILFLNKQDLLAEKVKAGKSKIEDYFPEYARYQVPPDASSEPGEDTEVVRAKYFIRDEFLRISTASGDGRHYCYPHFTCAVDTENIRRVFDDCRDIIQRMHLRQYELL.

Residue Gly2 is the site of N-palmitoyl glycine attachment. The S-palmitoyl cysteine moiety is linked to residue Cys3. One can recognise a G-alpha domain in the interval 36–376 (GTHRLLLLGA…RMHLRQYELL (341 aa)). A G1 motif region spans residues 39–52 (RLLLLGAGESGKST). Residues 44 to 51 (GAGESGKS), 180 to 186 (LRCRVLT), 205 to 209 (DVGGQ), 274 to 277 (NKQD), and Ala348 contribute to the GTP site. 2 residues coordinate Mg(2+): Ser51 and Thr186. The G2 motif stretch occupies residues 178-186 (DILRCRVLT). Positions 201–210 (FHMFDVGGQR) are G3 motif. The tract at residues 270–277 (ILFLNKQD) is G4 motif. The segment at 346–351 (TCAVDT) is G5 motif.

It belongs to the G-alpha family. G(s) subfamily. As to quaternary structure, g proteins are composed of 3 units; alpha, beta and gamma. The alpha chain contains the guanine nucleotide binding site.

Guanine nucleotide-binding proteins (G proteins) are involved as modulators or transducers in various transmembrane signaling systems. The G(s) protein is involved in hormonal regulation of adenylate cyclase: it activates the cyclase in response to beta-adrenergic stimuli. This chain is Guanine nucleotide-binding protein G(s) subunit alpha, found in Lymnaea stagnalis (Great pond snail).